The following is a 229-amino-acid chain: ATP synthase subunit a (229 aa).

The next 6 helical transmembrane spans lie at 25-45 (ADAV…SIAA), 82-102 (FFPL…IGLI), 104-124 (GFFP…VVFV), 142-162 (FLGP…IGHL), 181-201 (LVLI…MMLM), and 202-222 (GVLV…IYIQ).

The protein belongs to the ATPase A chain family. F-type ATPases have 2 components, CF(1) - the catalytic core - and CF(0) - the membrane proton channel. CF(1) has five subunits: alpha(3), beta(3), gamma(1), delta(1), epsilon(1). CF(0) has three main subunits: a(1), b(2) and c(9-12). The alpha and beta chains form an alternating ring which encloses part of the gamma chain. CF(1) is attached to CF(0) by a central stalk formed by the gamma and epsilon chains, while a peripheral stalk is formed by the delta and b chains.

It is found in the cell inner membrane. Key component of the proton channel; it plays a direct role in the translocation of protons across the membrane. This Geobacter sp. (strain M21) protein is ATP synthase subunit a.